Here is a 34-residue protein sequence, read N- to C-terminus: uncharacterized protein (34 aa).

The span at 1-12 (MFSHFEVSENRP) shows a compositional bias: basic and acidic residues. Residues 1 to 21 (MFSHFEVSENRPRKQPRRKRI) are disordered.

This is an uncharacterized protein from Saccharomyces cerevisiae (strain ATCC 204508 / S288c) (Baker's yeast).